Consider the following 195-residue polypeptide: Imidazoleglycerol-phosphate dehydratase (195 aa).

It belongs to the imidazoleglycerol-phosphate dehydratase family.

Its subcellular location is the cytoplasm. It carries out the reaction D-erythro-1-(imidazol-4-yl)glycerol 3-phosphate = 3-(imidazol-4-yl)-2-oxopropyl phosphate + H2O. It functions in the pathway amino-acid biosynthesis; L-histidine biosynthesis; L-histidine from 5-phospho-alpha-D-ribose 1-diphosphate: step 6/9. This Methylorubrum extorquens (strain CM4 / NCIMB 13688) (Methylobacterium extorquens) protein is Imidazoleglycerol-phosphate dehydratase.